The sequence spans 209 residues: Thymidylate kinase (209 aa).

ATP is bound at residue 10-17 (GIDGCGKS).

It belongs to the thymidylate kinase family.

It carries out the reaction dTMP + ATP = dTDP + ADP. In terms of biological role, phosphorylation of dTMP to form dTDP in both de novo and salvage pathways of dTTP synthesis. The chain is Thymidylate kinase from Parasynechococcus marenigrum (strain WH8102).